The chain runs to 423 residues: COP9 signalosome complex subunit 3 (423 aa).

At A2 the chain carries N-acetylalanine. One can recognise a PCI domain in the interval 197 to 365 (NFERALYFYE…GMVSFHDNPE (169 aa)). The tract at residues 402–423 (QFVQKSMGSQEDDSGNKPSSYS) is disordered. Residues S407, S410, and S423 each carry the phosphoserine modification.

This sequence belongs to the CSN3 family. In terms of assembly, component of the CSN complex, composed of COPS1/GPS1, COPS2, COPS3, COPS4, COPS5, COPS6, COPS7 (COPS7A or COPS7B), COPS8 and COPS9. In the complex, it probably interacts directly with COPS1, COPS4, COPS8 and COPS9. Interacts with CK2 and PKD. Interacts with the translation initiation factor EIF3S6 and IKBKG. Interacts with ERCC6.

It localises to the cytoplasm. The protein localises to the nucleus. Component of the COP9 signalosome complex (CSN), a complex involved in various cellular and developmental processes. The CSN complex is an essential regulator of the ubiquitin (Ubl) conjugation pathway by mediating the deneddylation of the cullin subunits of SCF-type E3 ligase complexes, leading to decrease the Ubl ligase activity of SCF-type complexes such as SCF, CSA or DDB2. The complex is also involved in phosphorylation of p53/TP53, c-jun/JUN, IkappaBalpha/NFKBIA, ITPK1 and IRF8/ICSBP, possibly via its association with CK2 and PKD kinases. CSN-dependent phosphorylation of TP53 and JUN promotes and protects degradation by the Ubl system, respectively. Essential to maintain the survival of epiblast cells and thus the development of the postimplantation embryo. This Bos taurus (Bovine) protein is COP9 signalosome complex subunit 3 (COPS3).